The chain runs to 311 residues: m7GpppX diphosphatase (311 aa).

Residues E159, K181, and 242 to 253 contribute to the substrate site; that span reads HYQPSFYHLHVH. The short motif at 249–253 is the Histidine triad motif element; sequence HLHVH. H251 serves as the catalytic Nucleophile.

It belongs to the HIT family. Expressed in neurons in the ventral cord, the nerve ring and the pharynx.

It is found in the nucleus. It carries out the reaction a 5'-end (N(7)-methyl 5'-triphosphoguanosine)-ribonucleoside in mRNA + H2O = N(7)-methyl-GMP + a 5'-end diphospho-ribonucleoside in mRNA + 2 H(+). It catalyses the reaction a 5'-end (N(2),N(2),N(7)-trimethyl 5'-triphosphoguanosine)-ribonucleoside in mRNA + H2O = (N(2),N(2),N(7))-trimethyl-GMP + a 5'-end diphospho-ribonucleoside in mRNA + 2 H(+). Its activity is regulated as follows. The hydrolytic product 7-methylguanosine diphosphate (m7GDP) efficiently inhibits the decapping scavenger activity and acts as a competitive inhibitor in vitro. Functionally, decapping scavenger enzyme that catalyzes the cleavage of a residual cap structure following the degradation of mRNAs of the 3'-&gt;5' exosome-mediated mRNA decay pathway. Hydrolyzes cap analog structures like 7-methylguanosine nucleoside triphosphate (m7GpppG) and tri-methyl guanosine nucleoside triphosphate (m3(2,2,7)GpppG) with up to 2 nucleotide substrates (small capped oligoribonucleotides) and specifically releases 5'-phosphorylated RNA fragments and 7-methylguanosine monophosphate (m7GMP). Does not hydrolyze unmethylated cap analog (GpppG) and shows no decapping activity on intact m7GpppG-capped mRNA molecules. Does not hydrolyze 7-methylguanosine diphosphate (m7GDP) and tri-methylguanosine diphosphate (m3(2,2,7)GDP) to m(7)GMP and m3(2,2,7)GMP, respectively. May also play a role in the 5'-&gt;3 mRNA decay pathway; m7GDP, the downstream product released by the 5'-&gt;3' mRNA mediated decapping activity, may be also converted by dcs-1 to m7GMP. Binds to m7GpppG and strongly to m7GDP. The sequence is that of m7GpppX diphosphatase (dcs-1) from Caenorhabditis elegans.